The chain runs to 211 residues: FMN-dependent NADH:quinone oxidoreductase 2 (211 aa).

17 to 19 (SYS) serves as a coordination point for FMN.

Belongs to the azoreductase type 1 family. In terms of assembly, homodimer. Requires FMN as cofactor.

The enzyme catalyses 2 a quinone + NADH + H(+) = 2 a 1,4-benzosemiquinone + NAD(+). It carries out the reaction N,N-dimethyl-1,4-phenylenediamine + anthranilate + 2 NAD(+) = 2-(4-dimethylaminophenyl)diazenylbenzoate + 2 NADH + 2 H(+). Its activity is regulated as follows. Strongly inhibited by Pb(2+) and weakly inhibited by Cu(2+), Hg(2+) and Fe(2+). Stable in presence of Ag(+). Its function is as follows. Quinone reductase that provides resistance to thiol-specific stress caused by electrophilic quinones. Contributes to resistance to 2-methylhydroquinone (2-MHQ) and catechol. Exhibits NADH-dependent 2,6-dichloroindophenol (DCIP) oxidoreductase activity. Also exhibits azoreductase activity. Catalyzes the reductive cleavage of the azo bond in aromatic azo compounds to the corresponding amines. Can reduce methyl red. The protein is FMN-dependent NADH:quinone oxidoreductase 2 of Bacillus subtilis (strain 168).